The following is a 340-amino-acid chain: Beta-ketoacyl-[acyl-carrier-protein] synthase III (340 aa).

Residues C119 and H260 contribute to the active site. The ACP-binding stretch occupies residues Q261–R265. Residue N290 is part of the active site.

Belongs to the thiolase-like superfamily. FabH family. As to quaternary structure, homodimer.

The protein resides in the cytoplasm. The catalysed reaction is malonyl-[ACP] + acetyl-CoA + H(+) = 3-oxobutanoyl-[ACP] + CO2 + CoA. It participates in lipid metabolism; fatty acid biosynthesis. Functionally, catalyzes the condensation reaction of fatty acid synthesis by the addition to an acyl acceptor of two carbons from malonyl-ACP. Catalyzes the first condensation reaction which initiates fatty acid synthesis and may therefore play a role in governing the total rate of fatty acid production. Possesses both acetoacetyl-ACP synthase and acetyl transacylase activities. Its substrate specificity determines the biosynthesis of branched-chain and/or straight-chain of fatty acids. In Sulfurovum sp. (strain NBC37-1), this protein is Beta-ketoacyl-[acyl-carrier-protein] synthase III.